Here is a 783-residue protein sequence, read N- to C-terminus: Flavin carrier protein 2 (783 aa).

The signal sequence occupies residues 1–22 (MIFLNTFARCLLTCFVLCSGTA). Over 23-182 (RSSDTNDTTP…NGKTVQTKYA (160 aa)) the chain is Lumenal. N-linked (GlcNAc...) asparagine glycans are attached at residues asparagine 28, asparagine 65, asparagine 81, and asparagine 156. Residues 183–203 (AWPIAAISGVGVLTSGFVSVI) traverse the membrane as a helical segment. Residues 204–211 (GYSATAAH) lie on the Cytoplasmic side of the membrane. The chain crosses the membrane as a helical span at residues 212-232 (IASNSISLFIYFQNLAITAMM). The Lumenal segment spans residues 233–347 (GVSRVPPIAA…AYLANIELSN (115 aa)). A glycan (N-linked (GlcNAc...) asparagine) is linked at asparagine 323. The chain crosses the membrane as a helical span at residues 348 to 368 (FFLTGIVFFLFFLFVVVVSLI). The Cytoplasmic portion of the chain corresponds to 369-402 (FFKALLEVLTRARILKETSNFFQYRKNWGSIIKG). A helical membrane pass occupies residues 403–423 (TLFRLSIIAFPQVSLLAIWEF). Residues 424 to 430 (TQVNSPA) lie on the Lumenal side of the membrane. A helical transmembrane segment spans residues 431–451 (IVVDAVVILLIITGLLVYGTI). Topologically, residues 452–492 (RVFIKGRESLRLYKNPAYLLYSDTYFLNKFGFLYVQFKADK) are cytoplasmic. Residues 493 to 513 (FWWLLPLLSYAFLRSLFVAVL) form a helical membrane-spanning segment. Residues 514–521 (QNQGKAQA) are Lumenal-facing. A helical membrane pass occupies residues 522-542 (MIIFVIELAYFVCLCWIRPYL). The Cytoplasmic portion of the chain corresponds to 543–547 (DKRTN). The chain crosses the membrane as a helical span at residues 548–568 (VFNIAIHLVNLINAFFFLFFS). Topologically, residues 569-581 (NLFKQPAVVSSVM) are lumenal. Residues 582–602 (AVILFVLNAVFALFLLLFTIV) traverse the membrane as a helical segment. Over 603 to 783 (TCTLALLHRN…ENARNNNPYL (181 aa)) the chain is Cytoplasmic. The tract at residues 681-783 (RLFDDETSSS…ENARNNNPYL (103 aa)) is disordered. A compositionally biased stretch (low complexity) spans 688–697 (SSSSFKQNSS). Polar residues-rich tracts occupy residues 704–748 (VTEQ…TSSL) and 756–767 (YLGNSNKSYSHF). A compositionally biased stretch (low complexity) spans 768-783 (NNNGSNENARNNNPYL).

This sequence belongs to the transient receptor potential (TRP) ion channel family.

It localises to the endoplasmic reticulum membrane. Functionally, may be responsible for the transport of FAD into the endoplasmic reticulum lumen, where it is required for oxidative protein folding. The protein is Flavin carrier protein 2 (FLC2) of Saccharomyces cerevisiae (strain ATCC 204508 / S288c) (Baker's yeast).